The chain runs to 378 residues: Queuine tRNA-ribosyltransferase (378 aa).

Residue aspartate 89 is the Proton acceptor of the active site. Residues 89-93 (DSGGF), aspartate 143, glutamine 187, and glycine 214 each bind substrate. The segment at 245 to 251 (GVGKPED) is RNA binding. Aspartate 264 serves as the catalytic Nucleophile. The tract at residues 269 to 273 (TRNAR) is RNA binding; important for wobble base 34 recognition. Positions 302, 304, 307, and 333 each coordinate Zn(2+).

This sequence belongs to the queuine tRNA-ribosyltransferase family. As to quaternary structure, homodimer. Within each dimer, one monomer is responsible for RNA recognition and catalysis, while the other monomer binds to the replacement base PreQ1. It depends on Zn(2+) as a cofactor.

The enzyme catalyses 7-aminomethyl-7-carbaguanine + guanosine(34) in tRNA = 7-aminomethyl-7-carbaguanosine(34) in tRNA + guanine. It functions in the pathway tRNA modification; tRNA-queuosine biosynthesis. Functionally, catalyzes the base-exchange of a guanine (G) residue with the queuine precursor 7-aminomethyl-7-deazaguanine (PreQ1) at position 34 (anticodon wobble position) in tRNAs with GU(N) anticodons (tRNA-Asp, -Asn, -His and -Tyr). Catalysis occurs through a double-displacement mechanism. The nucleophile active site attacks the C1' of nucleotide 34 to detach the guanine base from the RNA, forming a covalent enzyme-RNA intermediate. The proton acceptor active site deprotonates the incoming PreQ1, allowing a nucleophilic attack on the C1' of the ribose to form the product. After dissociation, two additional enzymatic reactions on the tRNA convert PreQ1 to queuine (Q), resulting in the hypermodified nucleoside queuosine (7-(((4,5-cis-dihydroxy-2-cyclopenten-1-yl)amino)methyl)-7-deazaguanosine). The chain is Queuine tRNA-ribosyltransferase from Yersinia enterocolitica serotype O:8 / biotype 1B (strain NCTC 13174 / 8081).